An 877-amino-acid polypeptide reads, in one-letter code: SRP-independent targeting protein 1 (877 aa).

Phosphoserine is present on residues Ser-309, Ser-310, Ser-311, Ser-332, and Ser-334. Disordered regions lie at residues 369-414, 446-521, and 550-579; these read LRKQ…PSND, DDYT…DVLS, and KPFN…SNHF. Over residues 389–402 the composition is skewed to low complexity; sequence RSQSYSSSNMSRSP. Residues 412-441 adopt a coiled-coil conformation; sequence SNDELVYDELNNQINEVQDRAKNEEIVLYN. Basic and acidic residues predominate over residues 447 to 462; sequence DYTKERGEQEQDRTSY. Positions 470-501 are enriched in acidic residues; the sequence is YDDEEGGNEDNYDDDEDDDDDDDDDDESDDEG. Polar residues-rich tracts occupy residues 510–521 and 551–579; these read LSRSGSSTDVLS and PFNQ…SNHF. Residues Lys-668 and Lys-670 each participate in a glycyl lysine isopeptide (Lys-Gly) (interchain with G-Cter in ubiquitin) cross-link. Residues Ser-692, Ser-694, and Ser-706 each carry the phosphoserine modification. The interval 773 to 815 is disordered; it reads SLPKEREDDNDSTNSTIVPNHPDNDNYNDNDNDNNTGINSNNF. The span at 805–815 shows a compositional bias: low complexity; sequence DNNTGINSNNF. Residue Ser-841 is modified to Phosphoserine.

Interacts with ENV10/SND2.

The protein localises to the cytoplasm. In terms of biological role, functions in the SND pathway, a SRP (signal recognition particle) and GET (guided entry of tail-anchored proteins) independent pathway for targeting a broad range of substrate proteins to the endoplasmic reticulum. SND functions in parallel to GET in targeting proteins with downstream hydrophobic motifs. The sequence is that of SRP-independent targeting protein 1 from Saccharomyces cerevisiae (strain ATCC 204508 / S288c) (Baker's yeast).